The following is a 408-amino-acid chain: Phosphopentomutase (408 aa).

Positions 10, 303, 308, 344, 345, and 356 each coordinate Mn(2+).

Belongs to the phosphopentomutase family. Mn(2+) serves as cofactor.

The protein resides in the cytoplasm. It catalyses the reaction 2-deoxy-alpha-D-ribose 1-phosphate = 2-deoxy-D-ribose 5-phosphate. The catalysed reaction is alpha-D-ribose 1-phosphate = D-ribose 5-phosphate. It functions in the pathway carbohydrate degradation; 2-deoxy-D-ribose 1-phosphate degradation; D-glyceraldehyde 3-phosphate and acetaldehyde from 2-deoxy-alpha-D-ribose 1-phosphate: step 1/2. Functionally, isomerase that catalyzes the conversion of deoxy-ribose 1-phosphate (dRib-1-P) and ribose 1-phosphate (Rib-1-P) to deoxy-ribose 5-phosphate (dRib-5-P) and ribose 5-phosphate (Rib-5-P), respectively. In Tolumonas auensis (strain DSM 9187 / NBRC 110442 / TA 4), this protein is Phosphopentomutase.